A 228-amino-acid chain; its full sequence is MAEVAENVVETFEEPAAPMEAEVAETILETNVVSTTELPEIKLFGRWSCDDVTVNDISLQDYISVKEKFARYLPHSAGRYAAKRFRKAQCPIVERLTCSLMMKGRNNGKKLMACRIVKHSFEIIHLLTGENPLQILVSAIINSGPREDSTRIGRAGTVRRQAVDVSPLRRVNQAIWLLCTGAREAAFRNIKTIAECLADELINAAKGSSNSYAIKKKDELERVAKSNR.

This sequence belongs to the universal ribosomal protein uS7 family.

In Drosophila melanogaster (Fruit fly), this protein is Small ribosomal subunit protein uS7A (RpS5a).